The primary structure comprises 479 residues: Ribulose bisphosphate carboxylase large chain (479 aa).

Positions 1–2 are excised as a propeptide; that stretch reads MS. Substrate contacts are provided by Asn123 and Thr173. The active-site Proton acceptor is Lys175. Lys177 provides a ligand contact to substrate. Mg(2+) is bound by residues Lys201, Asp203, and Glu204. Lys201 bears the N6-carboxylysine mark. Ser208 bears the Phosphoserine mark. His294 (proton acceptor) is an active-site residue. Substrate is bound by residues Arg295 and His327. Thr330 is modified (phosphothreonine). Ser379 lines the substrate pocket.

Belongs to the RuBisCO large chain family. Type I subfamily. Heterohexadecamer of 8 large chains and 8 small chains; disulfide-linked. The disulfide link is formed within the large subunit homodimers. Mg(2+) serves as cofactor. The disulfide bond which can form in the large chain dimeric partners within the hexadecamer appears to be associated with oxidative stress and protein turnover.

The protein resides in the plastid. It is found in the chloroplast. It carries out the reaction 2 (2R)-3-phosphoglycerate + 2 H(+) = D-ribulose 1,5-bisphosphate + CO2 + H2O. It catalyses the reaction D-ribulose 1,5-bisphosphate + O2 = 2-phosphoglycolate + (2R)-3-phosphoglycerate + 2 H(+). Its function is as follows. RuBisCO catalyzes two reactions: the carboxylation of D-ribulose 1,5-bisphosphate, the primary event in carbon dioxide fixation, as well as the oxidative fragmentation of the pentose substrate in the photorespiration process. Both reactions occur simultaneously and in competition at the same active site. This is Ribulose bisphosphate carboxylase large chain from Capsella bursa-pastoris (Shepherd's purse).